The following is a 312-amino-acid chain: MESALPAAGFLYWVGAGTVAYLALRISYSLFTALRVWGVGNEAGVGPGLGEWAVVTGSTDGIGKSYAEELAKHGMKVVLISRSKDKLDQVSSEIKEKFKVETRTIAVDFASEDIYDKIKTGLAGLEIGILVNNVGMSYEYPEYFLDVPDLDNVIKKMININILSVCKMTQLVLPGMVERSKGAILNISSGSGMLPVPLLTIYSATKTFVDFFSQCLHEEYRSKGVFVQSVLPYFVATKLAKIRKPTLDKPSPETFVKSAIKTVGLQSRTNGYLIHALMGSIISNLPSWIYLKIVMNMNKSTRAHYLKKTKKN.

Residues 4–24 (ALPAAGFLYWVGAGTVAYLAL) traverse the membrane as a helical segment. NADP(+) is bound at residue 50–79 (GEWAVVTGSTDGIGKSYAEELAKHGMKVVL). The next 2 membrane-spanning stretches (helical) occupy residues 182–202 (GAILNISSGSGMLPVPLLTIY) and 271–291 (GYLIHALMGSIISNLPSWIYL). Serine 189 contacts substrate. Catalysis depends on tyrosine 202, which acts as the Proton acceptor. The short motif at 308-312 (KTKKN) is the Di-lysine motif element.

It belongs to the short-chain dehydrogenases/reductases (SDR) family. 17-beta-HSD 3 subfamily. In terms of assembly, interacts with ELOVL1 and LASS2. As to expression, expressed in most tissues tested. Highly expressed in the ovary and mammary. Expressed in platelets.

The protein localises to the endoplasmic reticulum membrane. The enzyme catalyses a very-long-chain (3R)-3-hydroxyacyl-CoA + NADP(+) = a very-long-chain 3-oxoacyl-CoA + NADPH + H(+). The catalysed reaction is 17beta-estradiol + NAD(+) = estrone + NADH + H(+). It catalyses the reaction 17beta-estradiol + NADP(+) = estrone + NADPH + H(+). It carries out the reaction 3-oxooctadecanoyl-CoA + NADPH + H(+) = (3R)-hydroxyoctadecanoyl-CoA + NADP(+). The enzyme catalyses (7Z,10Z,13Z,16Z)-3-oxodocosatetraenoyl-CoA + NADPH + H(+) = (3R)-hydroxy-(7Z,10Z,13Z,16Z)-docosatetraenoyl-CoA + NADP(+). The catalysed reaction is 3-oxo-(7Z,10Z,13Z,16Z,19Z)-docosapentaenoyl-CoA + NADPH + H(+) = (3R)-hydroxy-(7Z,10Z,13Z,16Z,19Z)-docosapentaenoyl-CoA + NADP(+). It catalyses the reaction (8Z,11Z,14Z)-3-oxoeicosatrienoyl-CoA + NADPH + H(+) = (3R)-hydroxy-(8Z,11Z,14Z)-eicosatrienoyl-CoA + NADP(+). Its pathway is lipid metabolism; fatty acid biosynthesis. It functions in the pathway steroid biosynthesis; estrogen biosynthesis. Functionally, catalyzes the second of the four reactions of the long-chain fatty acids elongation cycle. This endoplasmic reticulum-bound enzymatic process, allows the addition of two carbons to the chain of long- and very long-chain fatty acids/VLCFAs per cycle. This enzyme has a 3-ketoacyl-CoA reductase activity, reducing 3-ketoacyl-CoA to 3-hydroxyacyl-CoA, within each cycle of fatty acid elongation. Thereby, it may participate in the production of VLCFAs of different chain lengths that are involved in multiple biological processes as precursors of membrane lipids and lipid mediators. May also catalyze the transformation of estrone (E1) into estradiol (E2) and play a role in estrogen formation. The polypeptide is Very-long-chain 3-oxoacyl-CoA reductase (Homo sapiens (Human)).